Here is a 91-residue protein sequence, read N- to C-terminus: UPF0358 protein SAS1047 (91 aa).

This sequence belongs to the UPF0358 family.

The chain is UPF0358 protein SAS1047 from Staphylococcus aureus (strain MSSA476).